The primary structure comprises 1182 residues: Rho guanine nucleotide exchange factor osg-1 (1182 aa).

Residues Met-1–Ser-12 are compositionally biased toward acidic residues. A disordered region spans residues Met-1 to Pro-96. The span at Ala-29 to Asn-41 shows a compositional bias: polar residues. The span at Ala-69–Arg-78 shows a compositional bias: basic and acidic residues. One can recognise a DH domain in the interval Val-357–His-544. The stretch at Glu-637 to Met-669 forms a coiled coil. A disordered region spans residues Ile-863 to Thr-884. Residues Ser-865–Ser-879 show a composition bias toward low complexity. A coiled-coil region spans residues Val-897–Ile-922.

In terms of tissue distribution, expressed in muscles in the body wall and head, and in the nervous system in neurons including FLP and ASE neurons in the head.

In terms of biological role, probable guanine nucleotide exchange factor which regulates the Rho GTPase rho-1. Functions in ASE sensory neurons where it promotes neuronal degeneration under conditions of oxidative stress. This is Rho guanine nucleotide exchange factor osg-1 from Caenorhabditis elegans.